The chain runs to 186 residues: Elongation factor P (186 aa).

This sequence belongs to the elongation factor P family.

The protein localises to the cytoplasm. Its pathway is protein biosynthesis; polypeptide chain elongation. Functionally, involved in peptide bond synthesis. Stimulates efficient translation and peptide-bond synthesis on native or reconstituted 70S ribosomes in vitro. Probably functions indirectly by altering the affinity of the ribosome for aminoacyl-tRNA, thus increasing their reactivity as acceptors for peptidyl transferase. In Maridesulfovibrio salexigens (strain ATCC 14822 / DSM 2638 / NCIMB 8403 / VKM B-1763) (Desulfovibrio salexigens), this protein is Elongation factor P.